Reading from the N-terminus, the 591-residue chain is Heterogeneous nuclear ribonucleoprotein L-like (591 aa).

A disordered region spans residues 1–120; the sequence is MSSSSSSSPK…STEGGGSHHK (120 aa). Over residues 20-31 the composition is skewed to basic and acidic residues; that stretch reads FESQAKRLKTEE. A Glycyl lysine isopeptide (Lys-Gly) (interchain with G-Cter in SUMO2) cross-link involves residue Lys-28. A Phosphoserine modification is found at Ser-37. Thr-48 is modified (phosphothreonine). Residues 57-73 show a composition bias toward gly residues; sequence SGGGDGGDGDGGSGGGG. A compositionally biased stretch (acidic residues) spans 74-91; it reads DGEEGEGGEEGDEGDGDE. Residues 92-105 are compositionally biased toward gly residues; it reads GGSGGDEGGSGGGP. A phosphoserine mark is found at Ser-107, Ser-117, and Ser-124. RRM domains follow at residues 125–199, 215–293, and 384–458; these read PVVH…YSTS, NKVL…YARP, and SVVM…VSKQ. Lys-540 participates in a covalent cross-link: Glycyl lysine isopeptide (Lys-Gly) (interchain with G-Cter in SUMO2).

In terms of assembly, interacts with HNRNPL.

Its function is as follows. RNA-binding protein that functions as a regulator of alternative splicing for multiple target mRNAs, including PTPRC/CD45 and STAT5A. Required for alternative splicing of PTPRC. The protein is Heterogeneous nuclear ribonucleoprotein L-like (Hnrnpll) of Mus musculus (Mouse).